A 318-amino-acid chain; its full sequence is uncharacterized protein (318 aa).

The disordered stretch occupies residues 19 to 63 (VPPDARHHEPRPGMTDHPDTGNGIGLTGRPPRAIPDPAPRSSHGP). Positions 21–37 (PDARHHEPRPGMTDHPD) are enriched in basic and acidic residues. ATP is bound at residue 72 to 79 (QKGGVGKT).

It belongs to the ParA family.

Its function is as follows. May play a role in septum formation. This is an uncharacterized protein from Mycobacterium tuberculosis (strain CDC 1551 / Oshkosh).